The primary structure comprises 484 residues: MTTLMVQGTTSDAGKSTLVTALCRWLLRQGVGVVPFKPQNMALNSAVTADGGEIGRAQAVQAQACRLAPHTDMNPVLLKPNSDTGAQVIIHGRAVTSMNAVAYHDYKATAMQAVLASHQRLSAAYPVVMVEGAGSPAEINLRAGDIANMGFAEAVDCPVILVADINRGGVFAHLVGTLELLSPSEQARVKGFVINRFRGDIALLQPGLDWLEQRTGKPVLGVLPYVTDLHLEAEDGIDVRQGAKLARVLKVIVPVLPRISNHTDFDPLRLHPQVDLQFIGPGQPIPAADLIILPGSKSVRGDLAQLRERGWDKAIERHLRYGGKLIGICGGLQMLGRQVHDPLGLEGAAGSSQGLGLLDYATVLEAEKQLRNVAGTLNLEAAAVAGYEIHAGVTSGPALERPAVQLADGRCDGAVSADGQILATYLHGLFEGSQSCAALLRWAGLEDVQAIDYEALRERDIERLADLVEKHLDTALLRQLCGVA.

The GATase cobBQ-type domain maps to 248–435; sequence VLKVIVPVLP…LHGLFEGSQS (188 aa). The Nucleophile role is filled by C329. H427 is a catalytic residue.

The protein belongs to the CobB/CobQ family. CobQ subfamily.

The protein operates within cofactor biosynthesis; adenosylcobalamin biosynthesis. In terms of biological role, catalyzes amidations at positions B, D, E, and G on adenosylcobyrinic A,C-diamide. NH(2) groups are provided by glutamine, and one molecule of ATP is hydrogenolyzed for each amidation. This chain is Cobyric acid synthase, found in Pseudomonas putida (strain GB-1).